We begin with the raw amino-acid sequence, 456 residues long: Bifunctional protein GlmU (456 aa).

Residues 1 to 229 (MTKKALSAVI…VMEVEGANNR (229 aa)) form a pyrophosphorylase region. UDP-N-acetyl-alpha-D-glucosamine is bound by residues 11-14 (LAAG), Lys-25, Gln-76, 81-82 (GT), 103-105 (YGD), Gly-140, Glu-154, Asn-169, and Asn-227. A Mg(2+)-binding site is contributed by Asp-105. Residue Asn-227 coordinates Mg(2+). The linker stretch occupies residues 230–250 (LQLAALERYFQNKQASKLLLE). The segment at 251–456 (GVMIYDPARF…QGWQRPIKKK (206 aa)) is N-acetyltransferase. Arg-333 and Lys-351 together coordinate UDP-N-acetyl-alpha-D-glucosamine. His-363 acts as the Proton acceptor in catalysis. The UDP-N-acetyl-alpha-D-glucosamine site is built by Tyr-366 and Asn-377. Acetyl-CoA-binding positions include Ala-380, 386–387 (NY), Ser-405, Ala-423, and Arg-440.

It in the N-terminal section; belongs to the N-acetylglucosamine-1-phosphate uridyltransferase family. In the C-terminal section; belongs to the transferase hexapeptide repeat family. As to quaternary structure, homotrimer. Requires Mg(2+) as cofactor.

Its subcellular location is the cytoplasm. It catalyses the reaction alpha-D-glucosamine 1-phosphate + acetyl-CoA = N-acetyl-alpha-D-glucosamine 1-phosphate + CoA + H(+). The enzyme catalyses N-acetyl-alpha-D-glucosamine 1-phosphate + UTP + H(+) = UDP-N-acetyl-alpha-D-glucosamine + diphosphate. The protein operates within nucleotide-sugar biosynthesis; UDP-N-acetyl-alpha-D-glucosamine biosynthesis; N-acetyl-alpha-D-glucosamine 1-phosphate from alpha-D-glucosamine 6-phosphate (route II): step 2/2. It participates in nucleotide-sugar biosynthesis; UDP-N-acetyl-alpha-D-glucosamine biosynthesis; UDP-N-acetyl-alpha-D-glucosamine from N-acetyl-alpha-D-glucosamine 1-phosphate: step 1/1. It functions in the pathway bacterial outer membrane biogenesis; LPS lipid A biosynthesis. Its function is as follows. Catalyzes the last two sequential reactions in the de novo biosynthetic pathway for UDP-N-acetylglucosamine (UDP-GlcNAc). The C-terminal domain catalyzes the transfer of acetyl group from acetyl coenzyme A to glucosamine-1-phosphate (GlcN-1-P) to produce N-acetylglucosamine-1-phosphate (GlcNAc-1-P), which is converted into UDP-GlcNAc by the transfer of uridine 5-monophosphate (from uridine 5-triphosphate), a reaction catalyzed by the N-terminal domain. In Haemophilus influenzae (strain 86-028NP), this protein is Bifunctional protein GlmU.